Reading from the N-terminus, the 602-residue chain is Elongation factor 4 (602 aa).

Residues 6–188 (KYIRNFCIIA…AIIRRVPPPR (183 aa)) form the tr-type G domain. GTP is bound by residues 18 to 23 (DHGKST) and 135 to 138 (NKID).

This sequence belongs to the TRAFAC class translation factor GTPase superfamily. Classic translation factor GTPase family. LepA subfamily.

Its subcellular location is the cell membrane. The catalysed reaction is GTP + H2O = GDP + phosphate + H(+). Required for accurate and efficient protein synthesis under certain stress conditions. May act as a fidelity factor of the translation reaction, by catalyzing a one-codon backward translocation of tRNAs on improperly translocated ribosomes. Back-translocation proceeds from a post-translocation (POST) complex to a pre-translocation (PRE) complex, thus giving elongation factor G a second chance to translocate the tRNAs correctly. Binds to ribosomes in a GTP-dependent manner. This is Elongation factor 4 from Moorella thermoacetica (strain ATCC 39073 / JCM 9320).